An 812-amino-acid polypeptide reads, in one-letter code: Mitochondrial intermediate peptidase (812 aa).

The transit peptide at 1–29 (MRLSRQLLRSTPFLTRAKPVSGKVSHFRS) directs the protein to the mitochondrion. A disordered region spans residues 19–49 (PVSGKVSHFRSRTDLKGGSSNSSKSPDSVGD). Positions 37–46 (SSNSSKSPDS) are enriched in low complexity. Histidine 595 is a binding site for Zn(2+). The active site involves glutamate 596. Residues histidine 599 and histidine 602 each coordinate Zn(2+).

Belongs to the peptidase M3 family. Requires Zn(2+) as cofactor.

The protein localises to the mitochondrion matrix. The catalysed reaction is Release of an N-terminal octapeptide as second stage of processing of some proteins imported into the mitochondrion.. In terms of biological role, cleaves proteins, imported into the mitochondrion, to their mature size. While most mitochondrial precursor proteins are processed to the mature form in one step by mitochondrial processing peptidase (MPP), the sequential cleavage by MIP of an octapeptide after initial processing by MPP is a required step for a subgroup of nuclear-encoded precursor proteins destined for the matrix or the inner membrane. This is Mitochondrial intermediate peptidase (OCT1) from Scheffersomyces stipitis (strain ATCC 58785 / CBS 6054 / NBRC 10063 / NRRL Y-11545) (Yeast).